A 243-amino-acid polypeptide reads, in one-letter code: Pyridoxine 5'-phosphate synthase (243 aa).

Asn9 is a binding site for 3-amino-2-oxopropyl phosphate. 11–12 (DH) lines the 1-deoxy-D-xylulose 5-phosphate pocket. Position 20 (Arg20) interacts with 3-amino-2-oxopropyl phosphate. Catalysis depends on His45, which acts as the Proton acceptor. 2 residues coordinate 1-deoxy-D-xylulose 5-phosphate: Arg47 and His52. The active-site Proton acceptor is the Glu72. Thr102 provides a ligand contact to 1-deoxy-D-xylulose 5-phosphate. The Proton donor role is filled by His193. 3-amino-2-oxopropyl phosphate contacts are provided by residues Gly194 and 215–216 (GH).

The protein belongs to the PNP synthase family. Homooctamer; tetramer of dimers.

It localises to the cytoplasm. It carries out the reaction 3-amino-2-oxopropyl phosphate + 1-deoxy-D-xylulose 5-phosphate = pyridoxine 5'-phosphate + phosphate + 2 H2O + H(+). Its pathway is cofactor biosynthesis; pyridoxine 5'-phosphate biosynthesis; pyridoxine 5'-phosphate from D-erythrose 4-phosphate: step 5/5. Functionally, catalyzes the complicated ring closure reaction between the two acyclic compounds 1-deoxy-D-xylulose-5-phosphate (DXP) and 3-amino-2-oxopropyl phosphate (1-amino-acetone-3-phosphate or AAP) to form pyridoxine 5'-phosphate (PNP) and inorganic phosphate. The protein is Pyridoxine 5'-phosphate synthase of Pectobacterium atrosepticum (strain SCRI 1043 / ATCC BAA-672) (Erwinia carotovora subsp. atroseptica).